The primary structure comprises 159 residues: Phosphopantetheine adenylyltransferase (159 aa).

Thr-10 provides a ligand contact to substrate. ATP is bound by residues 10–11 and His-18; that span reads TF. Substrate-binding residues include Lys-42, Leu-74, and Arg-88. ATP is bound by residues 89 to 91, Glu-99, and 124 to 130; these read GLR and NSFISST.

This sequence belongs to the bacterial CoaD family. As to quaternary structure, homohexamer. The cofactor is Mg(2+).

Its subcellular location is the cytoplasm. It carries out the reaction (R)-4'-phosphopantetheine + ATP + H(+) = 3'-dephospho-CoA + diphosphate. It participates in cofactor biosynthesis; coenzyme A biosynthesis; CoA from (R)-pantothenate: step 4/5. In terms of biological role, reversibly transfers an adenylyl group from ATP to 4'-phosphopantetheine, yielding dephospho-CoA (dPCoA) and pyrophosphate. This is Phosphopantetheine adenylyltransferase from Shewanella halifaxensis (strain HAW-EB4).